A 682-amino-acid chain; its full sequence is DNA-directed RNA polymerase subunit beta' (682 aa).

4 residues coordinate Zn(2+): Cys69, Cys71, Cys87, and Cys90. Mg(2+)-binding residues include Asp489, Asp491, and Asp493.

Belongs to the RNA polymerase beta' chain family. RpoC1 subfamily. In plastids the minimal PEP RNA polymerase catalytic core is composed of four subunits: alpha, beta, beta', and beta''. When a (nuclear-encoded) sigma factor is associated with the core the holoenzyme is formed, which can initiate transcription. Mg(2+) is required as a cofactor. It depends on Zn(2+) as a cofactor.

It is found in the plastid. The protein localises to the chloroplast. It catalyses the reaction RNA(n) + a ribonucleoside 5'-triphosphate = RNA(n+1) + diphosphate. In terms of biological role, DNA-dependent RNA polymerase catalyzes the transcription of DNA into RNA using the four ribonucleoside triphosphates as substrates. In Platanus occidentalis (Sycamore), this protein is DNA-directed RNA polymerase subunit beta'.